The following is a 182-amino-acid chain: MFKYIGDIVKGTGTQLRSMVMVFGHGFRKRDTLQYPEEQVYLPPRYRGRIVLTRDPDGEERCVACNLCAVACPVGCISLQKAETEDGRWYPDFFRINFSRCIFCGLCEEACPTTAIQLTPDFEMAEFKRQDLVYEKEDLLISGPGKNPDYNFYRVAGMAIGGKPKGSAQNEAEPINVKSLLP.

4Fe-4S ferredoxin-type domains follow at residues 52–82 (LTRD…LQKA) and 92–121 (DFFR…LTPD). Positions 62, 65, 68, 72, 101, 104, 107, and 111 each coordinate [4Fe-4S] cluster.

Belongs to the complex I 23 kDa subunit family. In terms of assembly, NDH-1 is composed of 13 different subunits. Subunits NuoA, H, J, K, L, M, N constitute the membrane sector of the complex. [4Fe-4S] cluster is required as a cofactor.

The protein localises to the cell inner membrane. It carries out the reaction a quinone + NADH + 5 H(+)(in) = a quinol + NAD(+) + 4 H(+)(out). NDH-1 shuttles electrons from NADH, via FMN and iron-sulfur (Fe-S) centers, to quinones in the respiratory chain. The immediate electron acceptor for the enzyme in this species is believed to be ubiquinone. Couples the redox reaction to proton translocation (for every two electrons transferred, four hydrogen ions are translocated across the cytoplasmic membrane), and thus conserves the redox energy in a proton gradient. This is NADH-quinone oxidoreductase subunit I from Pseudomonas syringae pv. syringae (strain B728a).